Here is a 210-residue protein sequence, read N- to C-terminus: Thiamine-phosphate synthase 2 (210 aa).

Residues 38–42 (QLREK) and Asp-70 contribute to the 4-amino-2-methyl-5-(diphosphooxymethyl)pyrimidine site. The Mg(2+) site is built by Asp-71 and Glu-90. Position 109 (Thr-109) interacts with 4-amino-2-methyl-5-(diphosphooxymethyl)pyrimidine. Position 135-137 (135-137 (TTT)) interacts with 2-[(2R,5Z)-2-carboxy-4-methylthiazol-5(2H)-ylidene]ethyl phosphate. Lys-138 serves as a coordination point for 4-amino-2-methyl-5-(diphosphooxymethyl)pyrimidine. Gly-165 lines the 2-[(2R,5Z)-2-carboxy-4-methylthiazol-5(2H)-ylidene]ethyl phosphate pocket.

Belongs to the thiamine-phosphate synthase family. Mg(2+) serves as cofactor.

The catalysed reaction is 2-[(2R,5Z)-2-carboxy-4-methylthiazol-5(2H)-ylidene]ethyl phosphate + 4-amino-2-methyl-5-(diphosphooxymethyl)pyrimidine + 2 H(+) = thiamine phosphate + CO2 + diphosphate. The enzyme catalyses 2-(2-carboxy-4-methylthiazol-5-yl)ethyl phosphate + 4-amino-2-methyl-5-(diphosphooxymethyl)pyrimidine + 2 H(+) = thiamine phosphate + CO2 + diphosphate. It catalyses the reaction 4-methyl-5-(2-phosphooxyethyl)-thiazole + 4-amino-2-methyl-5-(diphosphooxymethyl)pyrimidine + H(+) = thiamine phosphate + diphosphate. The protein operates within cofactor biosynthesis; thiamine diphosphate biosynthesis; thiamine phosphate from 4-amino-2-methyl-5-diphosphomethylpyrimidine and 4-methyl-5-(2-phosphoethyl)-thiazole: step 1/1. In terms of biological role, condenses 4-methyl-5-(beta-hydroxyethyl)thiazole monophosphate (THZ-P) and 2-methyl-4-amino-5-hydroxymethyl pyrimidine pyrophosphate (HMP-PP) to form thiamine monophosphate (TMP). This is Thiamine-phosphate synthase 2 from Streptococcus pneumoniae serotype 4 (strain ATCC BAA-334 / TIGR4).